Reading from the N-terminus, the 400-residue chain is NADH-quinone oxidoreductase subunit D (400 aa).

This sequence belongs to the complex I 49 kDa subunit family. NDH-1 is composed of 14 different subunits. Subunits NuoB, C, D, E, F, and G constitute the peripheral sector of the complex.

The protein localises to the cell inner membrane. The catalysed reaction is a quinone + NADH + 5 H(+)(in) = a quinol + NAD(+) + 4 H(+)(out). In terms of biological role, NDH-1 shuttles electrons from NADH, via FMN and iron-sulfur (Fe-S) centers, to quinones in the respiratory chain. The immediate electron acceptor for the enzyme in this species is believed to be a menaquinone. Couples the redox reaction to proton translocation (for every two electrons transferred, four hydrogen ions are translocated across the cytoplasmic membrane), and thus conserves the redox energy in a proton gradient. In Chlorobium phaeovibrioides (strain DSM 265 / 1930) (Prosthecochloris vibrioformis (strain DSM 265)), this protein is NADH-quinone oxidoreductase subunit D.